The chain runs to 676 residues: MPDPSTYRPAPGSIPVEPGVYRFRDPHGRVIYVGKAKSLRSRLNSYFADLSGLAPRTRQMVMTAAKVEWTVVNTEVEALQLEYNWIKEFDPRFNIRYRDDKSYPVLAVTLNEEFPRLKVYRGPRKKGVRYFGPYSHAWAIRETVDLLTRVFPARTCSAGVFKRHNQIDRPCLLGYIDKCSAPCVGRVSAEQHRQIVLDFCDFLAGKTDRLVRDLERKMTAAAEDLDFERAARLRDDIGALRRALEKQTVVFGDGTDADVVAFADDDLEAAVQVFHVRGGRVRGQRGWIVEKSGEPGESGEGQLVEQFLTQFYGDQAELGSAGDNAGDSGQDEATNPVPRQVLVPCLPDNADELTEWLSQLRGSRVALRVPQRGDKKALFETVQRNAKEALAQHKLKRAGDFTARTAALQSIQDTLGLADAPLRIECIDISHVQGTDVVASLVVFEDGLPRKSDYRHYAIREAAGDGRSDDVASIAEVTRRRFYRHLHDTQHPTELSAEGKSRKFAYPPNLFVVDGGAPQVNAAQAVLDELGISDVAVIGLAKRLEEVWVPSGSDLGPEPIILPRNSEGLYLLQRVRDEAHRFAITYHRSKRSKRMTASALDSVRGLGEHRRKALVTHFGSVARLKEASVEEITAVPGIGVTTARAVLEALGVPQAAPADSGTAAAVIDDDQRRVTG.

Positions 16–95 (VEPGVYRFRD…IKEFDPRFNI (80 aa)) constitute a GIY-YIG domain. The region spanning 208 to 243 (DRLVRDLERKMTAAAEDLDFERAARLRDDIGALRRA) is the UVR domain.

It belongs to the UvrC family. Interacts with UvrB in an incision complex.

It localises to the cytoplasm. In terms of biological role, the UvrABC repair system catalyzes the recognition and processing of DNA lesions. UvrC both incises the 5' and 3' sides of the lesion. The N-terminal half is responsible for the 3' incision and the C-terminal half is responsible for the 5' incision. The chain is UvrABC system protein C from Mycobacterium sp. (strain JLS).